The primary structure comprises 183 residues: Translation initiation factor IF-3 (183 aa).

The protein belongs to the IF-3 family. Monomer.

Its subcellular location is the cytoplasm. Functionally, IF-3 binds to the 30S ribosomal subunit and shifts the equilibrium between 70S ribosomes and their 50S and 30S subunits in favor of the free subunits, thus enhancing the availability of 30S subunits on which protein synthesis initiation begins. This Pseudomonas entomophila (strain L48) protein is Translation initiation factor IF-3.